We begin with the raw amino-acid sequence, 205 residues long: Ribosomal RNA small subunit methyltransferase G (205 aa).

S-adenosyl-L-methionine contacts are provided by residues Gly66, Phe71, 119–120 (IE), and Arg135.

This sequence belongs to the methyltransferase superfamily. RNA methyltransferase RsmG family.

It localises to the cytoplasm. It carries out the reaction guanosine(527) in 16S rRNA + S-adenosyl-L-methionine = N(7)-methylguanosine(527) in 16S rRNA + S-adenosyl-L-homocysteine. Functionally, specifically methylates the N7 position of guanine in position 527 of 16S rRNA. The protein is Ribosomal RNA small subunit methyltransferase G of Rhizobium etli (strain CIAT 652).